Here is a 417-residue protein sequence, read N- to C-terminus: SNF1 protein kinase subunit beta-3 (417 aa).

The segment covering 1–12 (MAGDNPENKDAS) has biased composition (basic and acidic residues). A disordered region spans residues 1-37 (MAGDNPENKDASMLDVSDAASNTTINGKHSADSTNEA). Residues S12, S21, S44, and S135 each carry the phosphoserine modification. Polar residues predominate over residues 19 to 37 (AASNTTINGKHSADSTNEA). Disordered regions lie at residues 64–155 (SSLI…VEGK) and 250–269 (GNEP…DDSK). Polar residues predominate over residues 118–136 (TGNTLQKMDYQPSQQPDSL). A compositionally biased stretch (low complexity) spans 137–149 (QNQGFQQQQEQQQ). The kinase-interacting sequence (KIS); required for interaction with SNF1 stretch occupies residues 152-342 (VEGKKGRAMM…DQQQNNHQNM (191 aa)). The span at 257–269 (LAEKKANHVDDSK) shows a compositional bias: basic and acidic residues. 2 positions are modified to phosphoserine: S276 and S279. An association with SNF1 kinase complex (ASC) domain; required for interaction with SNF4 region spans residues 343–417 (AWLTPPQLPP…VTQILYTPLQ (75 aa)).

This sequence belongs to the 5'-AMP-activated protein kinase beta subunit family. As to quaternary structure, component of the SNF1 kinase complex, a heterotrimeric complex composed of the catalytic alpha subunit SNF1, one of the three related beta subunits SIP1, SIP2 or GAL83, and the regulatory gamma subunit SNF4. The beta subunit serves as a bridge between the catalytic and the regulatory subunit. Interacts (via KIS domain) with SNF1. Interacts (via ASC domain) with SNF4. Interacts with REE1. In terms of processing, phosphorylated by SNF1 in vitro.

It is found in the cytoplasm. The protein resides in the nucleus. Beta subunit of the SNF1 kinase complex, which is required for transcriptional, metabolic, and developmental adaptations in response to glucose limitation. Has a structural role, mediating heterotrimer formation, and a regulatory role, defining carbon source-regulated subcellular location and substrate specificity of the SNF1 kinase complex. Promotes the relocalization of the SNF1 kinase complex to the nucleus upon shift to nonfermentable carbon sources. The chain is SNF1 protein kinase subunit beta-3 (GAL83) from Saccharomyces cerevisiae (strain ATCC 204508 / S288c) (Baker's yeast).